Consider the following 167-residue polypeptide: 6,7-dimethyl-8-ribityllumazine synthase (167 aa).

Residues Phe-26, 60 to 62 (AFE), and 89 to 91 (AII) contribute to the 5-amino-6-(D-ribitylamino)uracil site. 94-95 (ET) lines the (2S)-2-hydroxy-3-oxobutyl phosphate pocket. The Proton donor role is filled by His-97. Residue Phe-122 participates in 5-amino-6-(D-ribitylamino)uracil binding. Arg-136 is a binding site for (2S)-2-hydroxy-3-oxobutyl phosphate.

Belongs to the DMRL synthase family. As to quaternary structure, forms an icosahedral capsid composed of 60 subunits, arranged as a dodecamer of pentamers.

The enzyme catalyses (2S)-2-hydroxy-3-oxobutyl phosphate + 5-amino-6-(D-ribitylamino)uracil = 6,7-dimethyl-8-(1-D-ribityl)lumazine + phosphate + 2 H2O + H(+). It participates in cofactor biosynthesis; riboflavin biosynthesis; riboflavin from 2-hydroxy-3-oxobutyl phosphate and 5-amino-6-(D-ribitylamino)uracil: step 1/2. Functionally, catalyzes the formation of 6,7-dimethyl-8-ribityllumazine by condensation of 5-amino-6-(D-ribitylamino)uracil with 3,4-dihydroxy-2-butanone 4-phosphate. This is the penultimate step in the biosynthesis of riboflavin. The sequence is that of 6,7-dimethyl-8-ribityllumazine synthase from Ruthia magnifica subsp. Calyptogena magnifica.